Consider the following 387-residue polypeptide: Pepsin A (387 aa).

Residues 1-16 (MKKLLLLLGLVALSEC) form the signal peptide. Positions 17-61 (LYKVPLVKKKSLRQNLIENGLLKDFLAKHNVNPASKYFPTEAATE) are cleaved as a propeptide — activation peptide. Residues 75–384 (YFGTIGIGTP…DRGNNRVGLA (310 aa)) enclose the Peptidase A1 domain. D93 is an active-site residue. An intrachain disulfide couples C106 to C111. S129 is modified (phosphoserine). Residues C267 and C271 are joined by a disulfide bond. D276 is a catalytic residue. C310 and C343 are oxidised to a cystine.

This sequence belongs to the peptidase A1 family.

Its subcellular location is the secreted. It carries out the reaction Preferential cleavage: hydrophobic, preferably aromatic, residues in P1 and P1' positions. Cleaves 1-Phe-|-Val-2, 4-Gln-|-His-5, 13-Glu-|-Ala-14, 14-Ala-|-Leu-15, 15-Leu-|-Tyr-16, 16-Tyr-|-Leu-17, 23-Gly-|-Phe-24, 24-Phe-|-Phe-25 and 25-Phe-|-Tyr-26 bonds in the B chain of insulin.. Its function is as follows. Shows particularly broad specificity; although bonds involving phenylalanine and leucine are preferred, many others are also cleaved to some extent. This Suncus murinus (Asian house shrew) protein is Pepsin A (PGA).